Reading from the N-terminus, the 347-residue chain is Fructose-1,6-bisphosphatase class 1 2 (347 aa).

4 residues coordinate Mg(2+): E92, D111, L113, and D114. Substrate is bound by residues 114–117 and N202; that span reads DGSS. E274 contributes to the Mg(2+) binding site.

It belongs to the FBPase class 1 family. As to quaternary structure, homotetramer. It depends on Mg(2+) as a cofactor.

It is found in the cytoplasm. It carries out the reaction beta-D-fructose 1,6-bisphosphate + H2O = beta-D-fructose 6-phosphate + phosphate. Its pathway is carbohydrate biosynthesis; Calvin cycle. The polypeptide is Fructose-1,6-bisphosphatase class 1 2 (Bradyrhizobium sp. (strain BTAi1 / ATCC BAA-1182)).